The primary structure comprises 944 residues: TBC1 domain family member 31 (944 aa).

WD repeat units follow at residues 12–52 (ELVS…LDTF), 53–95 (QRKR…CDTL), 96–143 (FCKY…ARQL), 144–191 (FRII…IQTC), and 192–229 (KLLFEIGSLDEGISSSAISPHGRYIASIMEDGSLNIYS). Residues 262–281 (KRKVTSGRVQQPAKSRESKI) are disordered. Residues 300–476 (ELPDGLNKER…KLFDNIFSNH (177 aa)) form the Rab-GAP TBC domain. 2 coiled-coil regions span residues 605-735 (QKQE…QKVD) and 791-825 (NKCYQEVAKLLRENRRKEIEIINAMVEEEAKKWKE). Residues 865 to 875 (PCHKEEPRFQN) show a composition bias toward basic and acidic residues. Residues 865–900 (PCHKEEPRFQNEQEDSSCLPRTSQLNDSSEMDPSTQ) form a disordered region. Residues 883 to 900 (LPRTSQLNDSSEMDPSTQ) are compositionally biased toward polar residues. Residues 931 to 934 (QARH) are mediates direct interaction with PJA2.

Interacts with PJA2; the interaction is direct and recruits PJA2 to centrosomes. Interacts with OFD1; regulates its activity in cilium assembly. Interacts with PRKACA.

Its subcellular location is the cytoplasm. It is found in the cytoskeleton. The protein resides in the microtubule organizing center. The protein localises to the centrosome. It localises to the centriolar satellite. Its subcellular location is the cilium basal body. In terms of biological role, molecular adapter which is involved in cilium biogenesis. Part of a functional complex including OFD1 a centriolar protein involved in cilium assembly. Could regulate the cAMP-dependent phosphorylation of OFD1, and its subsequent ubiquitination by PJA2 which ultimately leads to its proteasomal degradation. The chain is TBC1 domain family member 31 from Pongo abelii (Sumatran orangutan).